We begin with the raw amino-acid sequence, 255 residues long: Undecaprenyl-diphosphatase (255 aa).

A run of 6 helical transmembrane segments spans residues 1–21, 75–95, 96–116, 174–194, 203–223, and 234–254; these read MDII…FLPI, IIIS…IVYQ, LFTV…FLIV, TEFS…FDIV, GDIS…LITI, and NFVP…MFFV.

It belongs to the UppP family.

The protein resides in the cell membrane. The enzyme catalyses di-trans,octa-cis-undecaprenyl diphosphate + H2O = di-trans,octa-cis-undecaprenyl phosphate + phosphate + H(+). Its function is as follows. Catalyzes the dephosphorylation of undecaprenyl diphosphate (UPP). The polypeptide is Undecaprenyl-diphosphatase (Methanococcus aeolicus (strain ATCC BAA-1280 / DSM 17508 / OCM 812 / Nankai-3)).